The primary structure comprises 477 residues: MTRQSLWDVSDTDVEDGEIRINVGGFKRRLRSHTLLRFPETRLGRLLLCHSREAILELCDDYDDVQREFYFDRNPELFPYVLHFYHTGKLHVMAELCVFSFSQEIEYWGINEFFIDSCCSYSYHGRKVEPEQEKWDEQSDQESTTSSFDEILAFYNDASKFDGQPLGNFRRQLWLALDNPGYSVLSRVFSVLSILVVLGSIITMCLNSLPDFQIPDSQGNPGEDPRFEIVEHFGIAWFTFELVARFAVAPDFLKFFKNALNLIDLMSIVPFYITLVVNLVVESSPTLANLGRVAQVLRLMRIFRILKLARHSTGLRSLGATLKYSYKEVGLLLLYLSVGISIFSVVAYTIEKEENEGLATIPACWWWATVSMTTVGYGDVVPGTTAGKLTASACILAGILVVVLPITLIFNKFSHFYRRQKQLESAMRSCDFGDGMKEVPSVNLRDYYAHKVKSLMASLTNMSRSSPSELSLDDSLH.

The Cytoplasmic portion of the chain corresponds to 1–184; that stretch reads MTRQSLWDVS…LALDNPGYSV (184 aa). Residues 185-206 traverse the membrane as a helical segment; the sequence is LSRVFSVLSILVVLGSIITMCL. At 207-225 the chain is on the extracellular side; sequence NSLPDFQIPDSQGNPGEDP. Residues 226–248 traverse the membrane as a helical segment; the sequence is RFEIVEHFGIAWFTFELVARFAV. The Cytoplasmic portion of the chain corresponds to 249-259; that stretch reads APDFLKFFKNA. The chain crosses the membrane as a helical span at residues 260–280; the sequence is LNLIDLMSIVPFYITLVVNLV. Topologically, residues 281–290 are extracellular; the sequence is VESSPTLANL. The helical; Voltage-sensor transmembrane segment at 291 to 311 threads the bilayer; the sequence is GRVAQVLRLMRIFRILKLARH. At 312 to 326 the chain is on the cytoplasmic side; that stretch reads STGLRSLGATLKYSY. Residues 327–348 traverse the membrane as a helical segment; the sequence is KEVGLLLLYLSVGISIFSVVAY. At 349–361 the chain is on the extracellular side; that stretch reads TIEKEENEGLATI. The helical intramembrane region spans 362–373; the sequence is PACWWWATVSMT. Residues 374-379 carry the Selectivity filter motif; it reads TVGYGD. Residues 374–381 lie within the membrane without spanning it; sequence TVGYGDVV. Over 382–388 the chain is Extracellular; it reads PGTTAGK. A helical membrane pass occupies residues 389 to 417; it reads LTASACILAGILVVVLPITLIFNKFSHFY. The Cytoplasmic segment spans residues 418 to 477; that stretch reads RRQKQLESAMRSCDFGDGMKEVPSVNLRDYYAHKVKSLMASLTNMSRSSPSELSLDDSLH.

It belongs to the potassium channel family. S (TC 1.A.1.2) subfamily. Kv9.2/KCNS2 sub-subfamily. Heterotetramer with KCNB1 and KCNB2. Does not form homomultimers. In terms of tissue distribution, detected in brain, but not in the other tissues tested. Expression was highest in the olfactory bulb, cerebral cortex, hippocampus, habenula, basolateral amygdaloid nuclei and cerebellum.

It localises to the cell membrane. Potassium channel regulatory subunit that modulate the delayed rectifier voltage-gated potassium channel activity of KCNB1 and KCNB2 by altering their kinetics, expression levels, and shifting the half-inactivation potential to more polarized values. While it does not form functional channels on its own, it can form functional heterotetrameric channels with KCNB1 and KCNB2. Each regulatory subunit has unique regulatory properties that can lead to extensive inhibition, significant changes in kinetics, and/or substantial shifts in the voltage dependencies of the inactivation process. This is Delayed-rectifier potassium channel regulatory subunit KCNS2 from Mus musculus (Mouse).